Reading from the N-terminus, the 293-residue chain is MQGFINLDKPFGWTSHDCVARLRKMLRLKRVGHAGTLDPAATGVLPIAVGKATRLLQYLPSDKAYKATVRFGVQTTTDDLQGEIISSQPCGGLSLSEVKTSLSQFIGKIEQIPPIYSAIQVEGKRLYDLARKGETIEVPARTVEVFSIDVLDWREGDFPELDVAIACGSGTYIRAIARDLGAIFHTGGTLAALIRTHSSGFNLTDSLTLTDLETQLQAGTFEPTPADAALQYLPSVTLPSISAQKWCQGQRIELNLETVGKVRVYQAETNIFLGIGELQTGVLIPQMVFEPIS.

The Nucleophile role is filled by Asp38.

The protein belongs to the pseudouridine synthase TruB family. Type 1 subfamily.

The catalysed reaction is uridine(55) in tRNA = pseudouridine(55) in tRNA. In terms of biological role, responsible for synthesis of pseudouridine from uracil-55 in the psi GC loop of transfer RNAs. In Trichormus variabilis (strain ATCC 29413 / PCC 7937) (Anabaena variabilis), this protein is tRNA pseudouridine synthase B.